The sequence spans 229 residues: GTP:AMP phosphotransferase (229 aa).

Residue 10-15 (GVGKGT) coordinates a ribonucleoside 5'-triphosphate. The interval 30 to 59 (NVGNILRNEIKKESNIGKEVQNVVRSGNLV) is NMP. Residues Arg36, 57–59 (NLV), Gly87, 87–90 (GFPR), and Gln94 contribute to the AMP site. Residues 123-170 (GRRICNICDKNFNVSNIQQDSFDMPPILPSKDCIQCNGHTNLIKRKDD) form an LID region. Residue Arg178 participates in AMP binding.

It belongs to the adenylate kinase family.

The protein resides in the mitochondrion. It carries out the reaction a ribonucleoside 5'-triphosphate + AMP = a ribonucleoside 5'-diphosphate + ADP. It catalyses the reaction GTP + AMP = GDP + ADP. Inhibited by the dinucleoside pentaphosphate compound P1,P5-di(guanosine-5') pentaphosphate (GP5A). Functionally, catalyzes the reversible transfer of the terminal phosphate group between GTP and AMP. Has very low activity with UTP, ITP, CTP and IMP and no activity with ATP, GMP, CMP and UMP in vitro. The sequence is that of GTP:AMP phosphotransferase from Plasmodium falciparum (isolate 3D7).